A 658-amino-acid chain; its full sequence is Glycogen debranching enzyme (658 aa).

Catalysis depends on Asp335, which acts as the Nucleophile. Glu370 (proton donor) is an active-site residue. Basic and acidic residues predominate over residues 457-468; that stretch reads NDANGEGNRDGT. The disordered stretch occupies residues 457-478; the sequence is NDANGEGNRDGTDSNFSNNHGT.

Belongs to the glycosyl hydrolase 13 family.

The enzyme catalyses Hydrolysis of (1-&gt;6)-alpha-D-glucosidic linkages to branches with degrees of polymerization of three or four glucose residues in limit dextrin.. Its pathway is glycan degradation; glycogen degradation. Functionally, removes maltotriose and maltotetraose chains that are attached by 1,6-alpha-linkage to the limit dextrin main chain, generating a debranched limit dextrin. The chain is Glycogen debranching enzyme from Pectobacterium carotovorum subsp. carotovorum (strain PC1).